Here is a 307-residue protein sequence, read N- to C-terminus: Auxiliary protein GraX (307 aa).

In terms of assembly, homodimer. Interacts with GraR and GraS.

Plays a role in resistance against cationic antimicrobial peptides (CAMPs). Facilitates the activation of GraS to transduce the signal to GraR. The polypeptide is Auxiliary protein GraX (graX) (Staphylococcus aureus (strain NCTC 8325 / PS 47)).